A 216-amino-acid polypeptide reads, in one-letter code: MOB kinase activator 3B (216 aa).

4 residues coordinate Zn(2+): C82, C87, H164, and H169.

Belongs to the MOB1/phocein family.

In terms of biological role, modulates LATS1 expression in the Hippo signaling pathway which plays a pivotal role in organ size control and tumor suppression by restricting proliferation and promoting apoptosis. The chain is MOB kinase activator 3B from Homo sapiens (Human).